A 448-amino-acid chain; its full sequence is Phosphoglucosamine mutase (448 aa).

The Phosphoserine intermediate role is filled by S104. The Mg(2+) site is built by S104, D245, D247, and D249. At S104 the chain carries Phosphoserine.

The protein belongs to the phosphohexose mutase family. The cofactor is Mg(2+). In terms of processing, activated by phosphorylation.

The enzyme catalyses alpha-D-glucosamine 1-phosphate = D-glucosamine 6-phosphate. Functionally, catalyzes the conversion of glucosamine-6-phosphate to glucosamine-1-phosphate. This Caulobacter vibrioides (strain ATCC 19089 / CIP 103742 / CB 15) (Caulobacter crescentus) protein is Phosphoglucosamine mutase.